The primary structure comprises 146 residues: Hemoglobin subunit beta-2 (146 aa).

The 145-residue stretch at 2-146 (GLTAHEKQLI…IADALGKGYH (145 aa)) folds into the Globin domain. Heme b is bound by residues His-63 and His-92.

This sequence belongs to the globin family. As to quaternary structure, heterotetramer of two alpha chains and two beta chains. In terms of tissue distribution, red blood cells.

Its function is as follows. Involved in oxygen transport from the lung to the various peripheral tissues. The chain is Hemoglobin subunit beta-2 (hbb2) from Xenopus borealis (Kenyan clawed frog).